The sequence spans 616 residues: Protein RIK (616 aa).

Residues methionine 1–aspartate 11 are compositionally biased toward basic and acidic residues. The segment at methionine 1 to alanine 32 is disordered. Residues glycine 198 to aspartate 304 enclose the KH domain. 3 stretches are compositionally biased toward polar residues: residues threonine 432–asparagine 449, threonine 475–serine 484, and leucine 491–isoleucine 502. Disordered stretches follow at residues threonine 432–glutamate 455 and leucine 467–valine 616. The segment covering leucine 534 to phenylalanine 564 has biased composition (pro residues). 2 stretches are compositionally biased toward basic and acidic residues: residues proline 565–asparagine 575 and serine 598–asparagine 610.

As to quaternary structure, interacts with RS2. Expressed in vegetative tissues. More abundant in apices and young leaf primordia than in fully expanded leaf tissues.

Its subcellular location is the nucleus. This Zea mays (Maize) protein is Protein RIK.